Reading from the N-terminus, the 265-residue chain is Flavin-dependent thymidylate synthase (265 aa).

A ThyX domain is found at 11-224; the sequence is GFLKLIDFMG…PIAFNSFENH (214 aa). FAD contacts are provided by residues Ser56, 79 to 81, and Glu87; that span reads RHR. 76–79 contacts dUMP; that stretch reads QWMR. The short motif at 79 to 89 is the ThyX motif element; that stretch reads RHRTARINEVS. Arg155 contacts dUMP. Residues 171 to 173 and His177 contribute to the FAD site; that span reads DLN. Arg182 contributes to the dUMP binding site. Catalysis depends on Arg182, which acts as the Involved in ionization of N3 of dUMP, leading to its activation.

It belongs to the thymidylate synthase ThyX family. As to quaternary structure, homotetramer. It depends on FAD as a cofactor.

The catalysed reaction is dUMP + (6R)-5,10-methylene-5,6,7,8-tetrahydrofolate + NADPH + H(+) = dTMP + (6S)-5,6,7,8-tetrahydrofolate + NADP(+). The protein operates within pyrimidine metabolism; dTTP biosynthesis. In terms of biological role, catalyzes the reductive methylation of 2'-deoxyuridine-5'-monophosphate (dUMP) to 2'-deoxythymidine-5'-monophosphate (dTMP) while utilizing 5,10-methylenetetrahydrofolate (mTHF) as the methyl donor, and NADPH and FADH(2) as the reductant. The chain is Flavin-dependent thymidylate synthase from Borreliella burgdorferi (strain ATCC 35210 / DSM 4680 / CIP 102532 / B31) (Borrelia burgdorferi).